The chain runs to 143 residues: Small ribosomal subunit protein uS12 (143 aa).

A Hydroxyproline modification is found at Pro-62.

It belongs to the universal ribosomal protein uS12 family.

The sequence is that of Small ribosomal subunit protein uS12 (rps23) from Dictyostelium discoideum (Social amoeba).